Here is a 33-residue protein sequence, read N- to C-terminus: MSDINATRLPIWGIGCNPCVGDEVTALLTRGEA.

Positions 1-10 (MSDINATRLP) are excised as a propeptide. Position 11 is a (3R,4R)-4,5-dihydroxyisoleucine; in form alpha-amanitin (I11). At I11 the chain carries (3R,4S)-4-hydroxyisoleucine; in form gamma-amanitin. Positions 11-18 (IWGIGCNP) form a cross-link, cyclopeptide (Ile-Pro). Positions 12-16 (WGIGC) form a cross-link, 2'-cysteinyl-6'-hydroxytryptophan sulfoxide (Trp-Cys). 4-hydroxyproline is present on P18. Positions 19-33 (CVGDEVTALLTRGEA) are excised as a propeptide.

Belongs to the MSDIN fungal toxin family. In terms of processing, processed by the macrocyclase-peptidase enzyme POPB to yield a toxic cyclic decapeptide. POPB first removes 10 residues from the N-terminus. Conformational trapping of the remaining peptide forces the enzyme to release this intermediate rather than proceed to macrocyclization. The enzyme rebinds the remaining peptide in a different conformation and catalyzes macrocyclization of the N-terminal 8 residues.

Its function is as follows. Major toxin belonging to the bicyclic octapeptides amatoxins that acts by binding non-competitively to RNA polymerase II and greatly slowing the elongation of transcripts from target promoters. The protein is Alpha-amanitin proprotein of Amanita fuligineoides.